A 1503-amino-acid chain; its full sequence is MLEINDFNAIRISLASPEDIRSWSHGEVTKPETINYRTLKPERDGLFCERIFGPTKDWECFCGKYKRVRYKGVVCDKCGVEVTRSKVRRERMGHINLASPVSHIWFVKGTPSRLGLLLDISPRNLERVLYFASYIIVEVKEDMLQVAREMIQEEYAARRQKIQKQAEEKRIELSTQLTQDLGGMETAQRSTQRQIEEEYRRLRDEIASEAEQLRERLEELSGTLADEDILFRGVTVVEEGEPINENTLDQLDELVEQELEVLEERRRRDLADAELLTDAERERKAYEATQEQERLQERLQRELDHLMREEKEKLEQLDTLKVGRIITETEYRQLRDIAPGVFRADMGAGAVRELIEKTVNLDKLAEELQAEIQSSQGQRRKKATKRLRVVEAFRKSGNRPEWMILTVLPVIPPDLRPMVQLDGGRFATSDLNDLYRRVINRNNRLKRLIELNAPEIIVRNEKRMLQEAVDALIDNGRRGRAVSGKGKHRLKSLSDMLKGKQGRFRQNLLGKRVDYSGRSVIVVGPNLQLHQCGLPKKMALELFKPFVMRRLVERGVAHNIKNAKRAVERVRPEVWDALEEVIKDYLVLLNRAPSLHRLSIQAFEAKLIEGSAIQLHPLVCAAFNADFDGDQMAVHVPLSRKAQEEARTRMLSKYNLLSPAHGEPIITPSQDIVLGCYYLTMVRDGAKGSGKRFSSIDEAMLAYEKHLLDIQAPIWIRMTGTLSGKSDRPVRELPLAADGTPRMLIETTIGRILLNNELQPPLRFRNRLIDKKGLKEIIADCYQYYTNLRNLSEDQLNEVRASHGNKHVQELARIYGSEMTAQQADRIKALGFRYATLGGMTIGIEDIEVPAKKYDIVREAEQLVADVEKQFRRGLITEEERYQEVVRIWQEATKQTIQAVKENLNPFGPVAMMSTSGARGNINQISQMAGMRGLMSDPTGRIIELPIKANFREGLSVLDYFVSTHGGRKGLADTALRTADAGYLTRRLVDVAQDVIITIEDCGTEEGLWLHGADDDELMEKLQVRMLGRILAAPIYHKETGELIADRNTEIDEELATAILASGQESVFVRSPLSCQAEHGLCRLCYGRNLATGKLVEIGEAVGIIAAQSIGEPGTQLTLRTFHTGGVASADDITQGLPRVQEIFEARVPKGKALLAEIDGVVQIVRDEEGVRTIRIVSTDVYTDEYPLGRGFSPTINHESEVYEGQVIAEGPGGAQIVTRLTGKAFIQGDRIIVSQEDHQERELVVPHNARIRVENGERVMAGQQLTDGSANPQELLELQGREAVQRYLVNEAQKVYRSQGVNINDKHIEVIVRQMLRRVRIEDPGDTGLLPGELIDSAEFRRLNNDIVSQGGDPATAATMLLGITKASLNTDSFLAAASFQETTRVLTDAAIQGKVDYLRGLKENVVIGKLIPAGTGIEKRIERPHEDLIGEMARMLEESQQAEEAPAETRRATPLPTPNGNKAPESDNDALLRARLEELLSGDGDNDQSDAEEEDNDLPAF.

Zn(2+) contacts are provided by cysteine 60, cysteine 62, cysteine 75, and cysteine 78. Mg(2+) is bound by residues aspartate 626, aspartate 628, and aspartate 630. Zn(2+) is bound by residues cysteine 1002, cysteine 1075, cysteine 1082, and cysteine 1085. The tract at residues 1439–1503 (EESQQAEEAP…EEEDNDLPAF (65 aa)) is disordered. Residues 1486–1503 (GDNDQSDAEEEDNDLPAF) show a composition bias toward acidic residues.

The protein belongs to the RNA polymerase beta' chain family. In terms of assembly, the RNAP catalytic core consists of 2 alpha, 1 beta, 1 beta' and 1 omega subunit. When a sigma factor is associated with the core the holoenzyme is formed, which can initiate transcription. Mg(2+) is required as a cofactor. Zn(2+) serves as cofactor.

The catalysed reaction is RNA(n) + a ribonucleoside 5'-triphosphate = RNA(n+1) + diphosphate. Its function is as follows. DNA-dependent RNA polymerase catalyzes the transcription of DNA into RNA using the four ribonucleoside triphosphates as substrates. This chain is DNA-directed RNA polymerase subunit beta', found in Chloroflexus aurantiacus (strain ATCC 29364 / DSM 637 / Y-400-fl).